Consider the following 580-residue polypeptide: Arginine--tRNA ligase (580 aa).

The short motif at 127-137 (PNTHKELHVGH) is the 'HIGH' region element.

It belongs to the class-I aminoacyl-tRNA synthetase family. In terms of assembly, monomer.

It is found in the cytoplasm. The enzyme catalyses tRNA(Arg) + L-arginine + ATP = L-arginyl-tRNA(Arg) + AMP + diphosphate. The polypeptide is Arginine--tRNA ligase (Bdellovibrio bacteriovorus (strain ATCC 15356 / DSM 50701 / NCIMB 9529 / HD100)).